A 238-amino-acid chain; its full sequence is Ion-translocating oxidoreductase complex subunit E (238 aa).

6 helical membrane-spanning segments follow: residues 20–40 (ALVQ…VVNA), 41–61 (LGLG…VSLI), 72–92 (PAFV…MKAF), 95–115 (ELYQ…AVLG), 130–150 (AVDG…VGAV), and 185–205 (NVIF…LIAA).

The protein belongs to the NqrDE/RnfAE family. In terms of assembly, the complex is composed of six subunits: RnfA, RnfB, RnfC, RnfD, RnfE and RnfG.

Its subcellular location is the cell inner membrane. Functionally, part of a membrane-bound complex that couples electron transfer with translocation of ions across the membrane. The chain is Ion-translocating oxidoreductase complex subunit E from Cellvibrio japonicus (strain Ueda107) (Pseudomonas fluorescens subsp. cellulosa).